A 242-amino-acid polypeptide reads, in one-letter code: Carboxy-S-adenosyl-L-methionine synthase (242 aa).

S-adenosyl-L-methionine-binding positions include Y39, 64 to 66 (GCS), 89 to 90 (DN), 117 to 118 (DI), N132, and R199.

It belongs to the class I-like SAM-binding methyltransferase superfamily. Cx-SAM synthase family. As to quaternary structure, homodimer.

It catalyses the reaction prephenate + S-adenosyl-L-methionine = carboxy-S-adenosyl-L-methionine + 3-phenylpyruvate + H2O. Functionally, catalyzes the conversion of S-adenosyl-L-methionine (SAM) to carboxy-S-adenosyl-L-methionine (Cx-SAM). This Aliivibrio fischeri (strain MJ11) (Vibrio fischeri) protein is Carboxy-S-adenosyl-L-methionine synthase.